A 328-amino-acid chain; its full sequence is MADLLNVLKDKLSGKNVKIVLPEGEDERVLTAATQLQATDYVTPIVLGDETKVQSLAQKLNLDISNIELINPATSELKAELVQSFVERRKGKTTEEQAQELLNNVNYFGTMLVYAGKADGLVSGAAHSTGDTVRPALQIIKTKPGVSRTSGIFFMIKGDEQYIFGDCAINPELDSQGLAEIAVESAKSALSFGMDPKVAMLSFSTKGSAKSDDVTKVQEAVKLAQQKAEEEKLEAIIDGEFQFDAAIVPGVAEKKAPGAKLQGDANVFVFPSLEAGNIGYKIAQRLGGYDAVGPVLQGLNSPVNDLSRGCSIEDVYNLSFITAAQALQ.

Belongs to the phosphate acetyltransferase and butyryltransferase family.

It is found in the cytoplasm. It carries out the reaction acetyl-CoA + phosphate = acetyl phosphate + CoA. It participates in metabolic intermediate biosynthesis; acetyl-CoA biosynthesis; acetyl-CoA from acetate: step 2/2. The polypeptide is Phosphate acetyltransferase (pta) (Staphylococcus aureus (strain MRSA252)).